A 411-amino-acid chain; its full sequence is Secretion apparatus protein BsaZ (411 aa).

A run of 4 helical transmembrane segments spans residues 28 to 48 (IVAL…VDLT), 80 to 100 (IAAP…LVQS), 137 to 157 (ALLY…LYHA), and 175 to 195 (IVLT…VLIL). A disordered region spans residues 341-411 (AANRGGPPPE…APARTGDQNA (71 aa)). Over residues 370–404 (DACADNAFPDDAPPGAAAPNAGSPDGPAPDGGAPA) the composition is skewed to low complexity.

The protein belongs to the type III secretion exporter family.

The protein localises to the cell membrane. In terms of biological role, part of the bsa type III secretion system, is involved in the intracellular replication of invading bacteria inside the host cell. Probably necessary for the lysis of the vacuole membrane and escape into the host cell cytoplasm. The chain is Secretion apparatus protein BsaZ (bsaZ) from Burkholderia pseudomallei (strain 1710b).